The chain runs to 43 residues: Bacteriocin leucocin-C (43 aa).

Cys-9 and Cys-14 are oxidised to a cystine.

It localises to the secreted. Inhibits a wide spectrum of lactic acid bacteria. This chain is Bacteriocin leucocin-C, found in Leuconostoc mesenteroides.